Here is a 301-residue protein sequence, read N- to C-terminus: Glycine--tRNA ligase alpha subunit (301 aa).

This sequence belongs to the class-II aminoacyl-tRNA synthetase family. Tetramer of two alpha and two beta subunits.

It localises to the cytoplasm. It carries out the reaction tRNA(Gly) + glycine + ATP = glycyl-tRNA(Gly) + AMP + diphosphate. In Proteus mirabilis (strain HI4320), this protein is Glycine--tRNA ligase alpha subunit.